A 438-amino-acid chain; its full sequence is Indole diterpene prenyltransferase janD (438 aa).

80–81 (FM) serves as a coordination point for L-tryptophan. Substrate contacts are provided by arginine 102, lysine 190, arginine 264, lysine 266, tyrosine 268, tyrosine 350, tyrosine 414, and tyrosine 418.

The protein belongs to the tryptophan dimethylallyltransferase family.

The protein operates within secondary metabolite biosynthesis. Its function is as follows. Indole diterpene prenyltransferase; part of the gene cluster that mediates the biosynthesis of the indole diterpenes janthitremanes such as shearinine K or shearinine A. The geranylgeranyl diphosphate (GGPP) synthase janG catalyzes the first step in janthitremane biosynthesis via conversion of farnesyl pyrophosphate and isopentyl pyrophosphate into geranylgeranyl pyrophosphate (GGPP). Condensation of indole-3-glycerol phosphate with GGPP by the prenyl transferase janC then forms 3-geranylgeranylindole (3-GGI). Epoxidation by the FAD-dependent monooxygenase janM leads to a epoxidized-GGI that is substrate of the terpene cyclase janB for cyclization to yield paspaline. Paspaline is subsequently converted to 13-desoxypaspaline by the cytochrome P450 monooxygenase janP, via beta-PC-M6 in a series of alpha-face oxidations. The cytochrome P450 monooxygenase janQ is proposed to carry out sequential beta-face oxidation steps at C-7 and C-13 of 13-desoxypaspaline to form paspalicine and paspalinine respectively. The indole diterpene prenyltransferase janD may then convert paspalinine into shearinine K which is substrate of janO and/or additional enzymes for oxidation and cyclization to generate shearinine A. This Penicillium janthinellum (Penicillium vitale) protein is Indole diterpene prenyltransferase janD.